The chain runs to 159 residues: 17 kDa surface antigen (159 aa).

An N-terminal signal peptide occupies residues 1 to 19 (MKLLSKIMIIALATSMLQA). The N-palmitoyl cysteine moiety is linked to residue Cys20. Cys20 carries S-diacylglycerol cysteine lipidation.

This sequence belongs to the rickettsiale 17 kDa surface antigen family.

Its subcellular location is the cell outer membrane. This is 17 kDa surface antigen (omp) from Rickettsia conorii (strain ATCC VR-613 / Malish 7).